Consider the following 483-residue polypeptide: RNA-binding protein Nova-1 (483 aa).

The tract at residues methionine 1–threonine 44 is disordered. A Bipartite nuclear localization signal motif is present at residues lysine 27–asparagine 43. KH domains lie at glutamine 49 to isoleucine 116, isoleucine 147 to isoleucine 213, and lysine 397 to isoleucine 464. The interval glycine 395–proline 479 is required for RNA binding.

As to quaternary structure, interacts with PTBP2; the interaction is direct.

The protein resides in the nucleus. Functionally, functions to regulate alternative splicing in neurons by binding pre-mRNA in a sequence-specific manner to activate exon inclusion or exclusion. It binds specifically to the sequences 5'-YCAY-3' and regulates splicing in only a subset of regulated exons. Binding to an exonic 5'-YCAY-3' cluster changes the protein complexes assembled on pre-mRNA, blocking U1 snRNP binding and exon inclusion, whereas binding to an intronic 5'-YCAY-3' cluster enhances spliceosome assembly and exon inclusion. Binding to 5'-YCAY-3' clusters results in a local and asymmetric action to regulate spliceosome assembly and alternative splicing in neurons. Binding to an exonic 5'-YCAY-3' cluster changed the protein complexes assembled on pre-mRNA, blocking U1 snRNP (small nuclear ribonucleoprotein) binding and exon inclusion, whereas binding to an intronic 5'-YCAY-3' cluster enhanced spliceosome assembly and exon inclusion. With NOVA1, they perform unique biological functions in different brain areas and cell types. Autoregulates its own expression by acting as a splicing repressor. Acts to activate the inclusion of exon E3A in the glycine receptor alpha-2 chain and of exon E9 in gamma-aminobutyric-acid receptor gamma-2 subunit via a distal downstream UCAU-rich intronic splicing enhancer. Acts to regulate a novel glycine receptor alpha-2 chain splice variant (alpha-2N) in developing spinal cord. The chain is RNA-binding protein Nova-1 (NOVA1) from Macaca fascicularis (Crab-eating macaque).